Reading from the N-terminus, the 30-residue chain is SGSGVRSAKKGGKAQGGQAGVGYKGSTEPG.

The interval 1–30 is disordered; it reads SGSGVRSAKKGGKAQGGQAGVGYKGSTEPG. Positions 13-23 are enriched in gly residues; the sequence is KAQGGQAGVGY.

It localises to the plastid. Its subcellular location is the chloroplast. Functionally, may be a component of the cytochrome b6/f complex which is part of the photosynthetic respiratory chain. The chain is Cytochrome b6/f complex 12.6 kDa peptide from Euglena gracilis.